The primary structure comprises 235 residues: BPI fold-containing family A member 2 (235 aa).

A signal peptide spans 1 to 20; sequence MFQLGSLVVLCGLLIGNSES. A disulfide bond links Cys-161 and Cys-204.

This sequence belongs to the BPI/LBP/Plunc superfamily. Plunc family. As to expression, predominates in the parotid glands, present in smaller amounts (1/10) in the submaxillary glands and in the sublingual glands, and at lower amount in the pancreas but undetectable in the liver. Found also in lacrimal gland.

The protein resides in the secreted. Has strong antibacterial activity against P.aeruginosa. The chain is BPI fold-containing family A member 2 (Bpifa2) from Mus musculus (Mouse).